Here is a 1190-residue protein sequence, read N- to C-terminus: ATPase histone chaperone abo1 (1190 aa).

A compositionally biased stretch (basic and acidic residues) spans 1–11 (MKEEASEHGGS). Disordered regions lie at residues 1–185 (MKEE…RKTH) and 204–253 (YIDS…DLAD). 2 stretches are compositionally biased toward acidic residues: residues 52-62 (QEDEGDEDWEE) and 82-106 (SEGD…DSED). A compositionally biased stretch (basic residues) spans 112–131 (VRSKPKYKPGTRRSTRLRNR). Residues 141 to 152 (EEHRPILRERTS) show a composition bias toward basic and acidic residues. 309–314 (PGTGKT) serves as a coordination point for ATP. A Bromo domain is found at 794–922 (RLLNKLKIKL…ANVLLGVEDM (129 aa)).

Belongs to the AAA ATPase family. In terms of assembly, homohexamer. Interacts with the FACT complex subunits spt16 and pob3. Interacts with histone H3-H4 (via N-terminus).

It localises to the nucleus. Its subcellular location is the chromosome. It carries out the reaction ATP + H2O = ADP + phosphate + H(+). ATPase histone chaperone which facilitates loading of histone H3-H4 onto DNA in an ATP-dependent manner. Plays a genome-wide role in nucleosome organization and establishment of chromatin. Also plays a role in heterochromatin assembly by stabilizing recruitment of the histone methyltransferase clr4 to methylated histone H3, to promote the transition from H3K9me2 to H3K9me3. This Schizosaccharomyces pombe (strain 972 / ATCC 24843) (Fission yeast) protein is ATPase histone chaperone abo1.